Here is a 191-residue protein sequence, read N- to C-terminus: A-type ATP synthase subunit E (191 aa).

The protein belongs to the V-ATPase E subunit family. In terms of assembly, has multiple subunits with at least A(3), B(3), C, D, E, F, H, I and proteolipid K(x). In terms of processing, the N-terminus is blocked.

It localises to the cell membrane. Its function is as follows. Component of the A-type ATP synthase that produces ATP from ADP in the presence of a proton gradient across the membrane. The polypeptide is A-type ATP synthase subunit E (Sulfurisphaera tokodaii (strain DSM 16993 / JCM 10545 / NBRC 100140 / 7) (Sulfolobus tokodaii)).